We begin with the raw amino-acid sequence, 339 residues long: Phosphate acyltransferase (339 aa).

The protein belongs to the PlsX family. Homodimer. Probably interacts with PlsY.

The protein resides in the cytoplasm. The catalysed reaction is a fatty acyl-[ACP] + phosphate = an acyl phosphate + holo-[ACP]. It participates in lipid metabolism; phospholipid metabolism. Its function is as follows. Catalyzes the reversible formation of acyl-phosphate (acyl-PO(4)) from acyl-[acyl-carrier-protein] (acyl-ACP). This enzyme utilizes acyl-ACP as fatty acyl donor, but not acyl-CoA. The polypeptide is Phosphate acyltransferase (Clostridium perfringens (strain ATCC 13124 / DSM 756 / JCM 1290 / NCIMB 6125 / NCTC 8237 / Type A)).